The sequence spans 448 residues: Bud neck protein 5 (448 aa).

Disordered stretches follow at residues 63 to 103, 171 to 211, and 242 to 352; these read SGND…DPSQ, DDEW…TLGG, and GDNE…SSPI. Ser-70 and Ser-179 each carry phosphoserine. The span at 171–180 shows a compositional bias: acidic residues; the sequence is DDEWEDEKSD. Positions 181–191 are enriched in basic and acidic residues; that stretch reads VEEGRVDKGTE. A Phosphoserine modification is found at Ser-194. Over residues 245–262 the composition is skewed to basic and acidic residues; it reads EYNHESSRLADQTPHDDN. Phosphothreonine is present on Thr-257. The span at 264–281 shows a compositional bias: polar residues; the sequence is ENCPNRSGGSTPLDSQTK. 2 positions are modified to phosphoserine: Ser-270 and Ser-273. Thr-274 carries the post-translational modification Phosphothreonine. The span at 325–343 shows a compositional bias: low complexity; it reads SVSSNSNSRNGSRKSSLNK. Phosphoserine is present on residues Ser-332 and Ser-340. A Phosphotyrosine modification is found at Tyr-344. A phosphoserine mark is found at Ser-346 and Ser-350.

As to quaternary structure, component of the GIN4 complex composed of at least BNI5, CDC3, CDC10, CDC11, CDC12, GIN4, NAP1 and SHS1. Interacts directly with CDC11, CDC12 and SHS1.

Its subcellular location is the cytoplasm. The protein resides in the bud neck. Its function is as follows. Required for normal septin function and cytokinesis. Its recruitment to the bud neck by CDCd11 and SHS1 ensures efficient localization at the bud neck of MYO1, the type II myosin of the actomyosin contractile ring. The sequence is that of Bud neck protein 5 from Saccharomyces cerevisiae (strain ATCC 204508 / S288c) (Baker's yeast).